The primary structure comprises 251 residues: DNA repair protein RecO (251 aa).

It belongs to the RecO family.

Functionally, involved in DNA repair and RecF pathway recombination. The sequence is that of DNA repair protein RecO from Albidiferax ferrireducens (strain ATCC BAA-621 / DSM 15236 / T118) (Rhodoferax ferrireducens).